Here is a 364-residue protein sequence, read N- to C-terminus: Probable dual-specificity RNA methyltransferase RlmN (364 aa).

Residue Glu-106 is the Proton acceptor of the active site. In terms of domain architecture, Radical SAM core spans 112 to 351 (YPHRNTVCIS…CTVRDTRGRE (240 aa)). A disulfide bridge connects residues Cys-119 and Cys-356. Residues Cys-126, Cys-130, and Cys-133 each contribute to the [4Fe-4S] cluster site. S-adenosyl-L-methionine-binding positions include 177 to 178 (GE), Ser-211, 234 to 236 (SLH), and Asn-313. The active-site S-methylcysteine intermediate is Cys-356.

This sequence belongs to the radical SAM superfamily. RlmN family. The cofactor is [4Fe-4S] cluster.

The protein resides in the cytoplasm. It carries out the reaction adenosine(2503) in 23S rRNA + 2 reduced [2Fe-2S]-[ferredoxin] + 2 S-adenosyl-L-methionine = 2-methyladenosine(2503) in 23S rRNA + 5'-deoxyadenosine + L-methionine + 2 oxidized [2Fe-2S]-[ferredoxin] + S-adenosyl-L-homocysteine. The enzyme catalyses adenosine(37) in tRNA + 2 reduced [2Fe-2S]-[ferredoxin] + 2 S-adenosyl-L-methionine = 2-methyladenosine(37) in tRNA + 5'-deoxyadenosine + L-methionine + 2 oxidized [2Fe-2S]-[ferredoxin] + S-adenosyl-L-homocysteine. In terms of biological role, specifically methylates position 2 of adenine 2503 in 23S rRNA and position 2 of adenine 37 in tRNAs. The polypeptide is Probable dual-specificity RNA methyltransferase RlmN (Mycolicibacterium paratuberculosis (strain ATCC BAA-968 / K-10) (Mycobacterium paratuberculosis)).